The chain runs to 1006 residues: DNA polymerase (1006 aa).

Belongs to the DNA polymerase type-B family. In terms of assembly, interacts with OPG148. Component of the Uracil-DNA glycosylase(UDG)-OPG148-polymerase complex; OPG148 and OPG116/UDG form a heterodimeric processivity factor that associates with OPG071 to form the processive polymerase holoenzyme.

It catalyses the reaction DNA(n) + a 2'-deoxyribonucleoside 5'-triphosphate = DNA(n+1) + diphosphate. In terms of biological role, catalyzes DNA synthesis. Acquires processivity by associating with a heterodimeric processivity factor comprised of the viral OPG148 and OPG116 proteins, thereby forming the DNA polymerase holoenzyme. Displays 3'- to 5' exonuclease activity. Might participate in viral DNA recombination. Does not perform OPG116/D4synthesis across an abasic site. The chain is DNA polymerase (OPG071) from Homo sapiens (Human).